The sequence spans 1216 residues: Regulator of telomere elongation helicase 1 (1216 aa).

The region spanning 7 to 295 (KGVTVDFPFQ…TKVAQQAELH (289 aa)) is the Helicase ATP-binding domain. Residue 42–49 (SPTGTGKT) coordinates ATP. Positions 144, 162, 171, and 206 each coordinate [4Fe-4S] cluster. The short motif at 150-166 (KKQESNHMQVHLCRRKV) is the Nuclear localization signal element. A DEAH box motif is present at residues 249-252 (DEAH). Residues 874–880 (QRGRRRK) carry the Nuclear localization signal motif. Disordered regions lie at residues 978–1018 (GCSS…ATRQ) and 1140–1172 (GPGTQAPGPQEGGPAMPSDPVCEAPSPGPRKTQ). The short motif at 1172 to 1179 (QSKISSFL) is the PIP-box element.

The protein belongs to the helicase family. RAD3/XPD subfamily. As to quaternary structure, interacts with TERF1. Interacts (via PIP-box) with PCNA; the interaction is direct and essential for suppressing telomere fragility. Interacts with MMS19; the interaction mediates the association of RTEL1 with the cytosolic iron-sulfur protein assembly (CIA) complex. In terms of tissue distribution, highly expressed in adult testis, liver and ovary.

The protein resides in the nucleus. It carries out the reaction ATP + H2O = ADP + phosphate + H(+). Functionally, a probable ATP-dependent DNA helicase implicated in telomere-length regulation, DNA repair and the maintenance of genomic stability. Acts as an anti-recombinase to counteract toxic recombination and limit crossover during meiosis. Regulates meiotic recombination and crossover homeostasis by physically dissociating strand invasion events and thereby promotes noncrossover repair by meiotic synthesis dependent strand annealing (SDSA) as well as disassembly of D loop recombination intermediates. Also disassembles T loops and prevents telomere fragility by counteracting telomeric G4-DNA structures, which together ensure the dynamics and stability of the telomere. The sequence is that of Regulator of telomere elongation helicase 1 from Bos taurus (Bovine).